The sequence spans 232 residues: Large ribosomal subunit protein uL1 (232 aa).

Belongs to the universal ribosomal protein uL1 family. As to quaternary structure, part of the 50S ribosomal subunit.

In terms of biological role, binds directly to 23S rRNA. The L1 stalk is quite mobile in the ribosome, and is involved in E site tRNA release. Its function is as follows. Protein L1 is also a translational repressor protein, it controls the translation of the L11 operon by binding to its mRNA. This is Large ribosomal subunit protein uL1 from Maricaulis maris (strain MCS10) (Caulobacter maris).